Consider the following 120-residue polypeptide: MKILFVLISILHAVYCFSSEEDVDSAYLANELEPVEDINSEQYAALEPKEEHERSCADMGQDCKDDCDCCLNIATCNCWFGRYFCSCTFGDYQTCLRKKGKCKRNRPQSCPRSNLNRKKG.

Positions 1–16 (MKILFVLISILHAVYC) are cleaved as a signal peptide. Positions 17-54 (FSSEEDVDSAYLANELEPVEDINSEQYAALEPKEEHER) are excised as a propeptide. Intrachain disulfides connect cysteine 56–cysteine 70, cysteine 63–cysteine 76, cysteine 69–cysteine 87, and cysteine 78–cysteine 85. The region spanning 56–95 (CADMGQDCKDDCDCCLNIATCNCWFGRYFCSCTFGDYQTC) is the Agouti domain.

This sequence belongs to the neurotoxin 05 (agouti) family. In terms of processing, contains 6 disulfide bonds. In terms of tissue distribution, expressed by the venom gland.

It localises to the secreted. The sequence is that of U13-lycotoxin-Ls1a from Lycosa singoriensis (Wolf spider).